Consider the following 1191-residue polypeptide: Puratrophin-1 (1191 aa).

2 disordered regions span residues 1–152 and 707–728; these read MERP…DPVG and AGGGALPQASPTVPPPGSSDPR. At Ser-64 the chain carries Phosphoserine. Residues 111 to 120 show a composition bias toward polar residues; it reads SHLSLAQGES. In terms of domain architecture, DH spans 732 to 908; that stretch reads RLQLVLAEMV…HFQLRHGNDL (177 aa). The region spanning 920 to 1027 is the PH domain; sequence NLKEQGQLVR…WTADISHLLW (108 aa). The segment at 1150-1176 is disordered; it reads SLTAEDSEISSQCPSASGSSGSDSSCV. Over residues 1159 to 1176 the composition is skewed to low complexity; it reads SSQCPSASGSSGSDSSCV.

In terms of tissue distribution, expressed in kidney, Leydig cells in the testis, epithelial cells in the prostate gland and Langerhans islet in the pancreas. Isoform 1 and isoform 3 are strongly expressed in Purkinje cells and to a lower extent in other neurons (at protein level). Widely expressed at low levels. More strongly expressed in testis and pancreas.

Possible role in intracellular signaling and cytoskeleton dynamics at the Golgi. In Homo sapiens (Human), this protein is Puratrophin-1 (PLEKHG4).